The following is a 334-amino-acid chain: GTP 3',8-cyclase (334 aa).

The Radical SAM core domain maps to 11–236 (GFNRKIDYLR…ESTESSMGPA (226 aa)). Position 20 (Arg20) interacts with GTP. Positions 27 and 31 each coordinate [4Fe-4S] cluster. Tyr33 is an S-adenosyl-L-methionine binding site. [4Fe-4S] cluster is bound at residue Cys34. GTP is bound at residue Arg69. Gly73 contributes to the S-adenosyl-L-methionine binding site. Residue Thr100 coordinates GTP. Residue Ser124 coordinates S-adenosyl-L-methionine. Lys161 contacts GTP. Residue Met195 coordinates S-adenosyl-L-methionine. [4Fe-4S] cluster-binding residues include Cys260 and Cys263. 265 to 267 (RVR) is a GTP binding site. Residue Cys277 participates in [4Fe-4S] cluster binding.

It belongs to the radical SAM superfamily. MoaA family. Monomer and homodimer. It depends on [4Fe-4S] cluster as a cofactor.

The enzyme catalyses GTP + AH2 + S-adenosyl-L-methionine = (8S)-3',8-cyclo-7,8-dihydroguanosine 5'-triphosphate + 5'-deoxyadenosine + L-methionine + A + H(+). Its pathway is cofactor biosynthesis; molybdopterin biosynthesis. Its function is as follows. Catalyzes the cyclization of GTP to (8S)-3',8-cyclo-7,8-dihydroguanosine 5'-triphosphate. In Pseudomonas putida (strain ATCC 47054 / DSM 6125 / CFBP 8728 / NCIMB 11950 / KT2440), this protein is GTP 3',8-cyclase.